The following is a 338-amino-acid chain: Stage V sporulation protein AD (338 aa).

The protein is Stage V sporulation protein AD (spoVAD) of Bacillus subtilis (strain 168).